A 241-amino-acid polypeptide reads, in one-letter code: 1-(5-phosphoribosyl)-5-[(5-phosphoribosylamino)methylideneamino] imidazole-4-carboxamide isomerase (241 aa).

Aspartate 8 (proton acceptor) is an active-site residue. Aspartate 129 (proton donor) is an active-site residue.

The protein belongs to the HisA/HisF family.

It localises to the cytoplasm. It catalyses the reaction 1-(5-phospho-beta-D-ribosyl)-5-[(5-phospho-beta-D-ribosylamino)methylideneamino]imidazole-4-carboxamide = 5-[(5-phospho-1-deoxy-D-ribulos-1-ylimino)methylamino]-1-(5-phospho-beta-D-ribosyl)imidazole-4-carboxamide. The protein operates within amino-acid biosynthesis; L-histidine biosynthesis; L-histidine from 5-phospho-alpha-D-ribose 1-diphosphate: step 4/9. The chain is 1-(5-phosphoribosyl)-5-[(5-phosphoribosylamino)methylideneamino] imidazole-4-carboxamide isomerase from Novosphingobium aromaticivorans (strain ATCC 700278 / DSM 12444 / CCUG 56034 / CIP 105152 / NBRC 16084 / F199).